The primary structure comprises 354 residues: RNA 3'-terminal phosphate cyclase (354 aa).

Residues Gln100 and 290-293 (HMGD) each bind ATP. Residue His316 is the Tele-AMP-histidine intermediate of the active site.

The protein belongs to the RNA 3'-terminal cyclase family. Type 1 subfamily.

It localises to the cytoplasm. The catalysed reaction is a 3'-end 3'-phospho-ribonucleotide-RNA + ATP = a 3'-end 2',3'-cyclophospho-ribonucleotide-RNA + AMP + diphosphate. Functionally, catalyzes the conversion of 3'-phosphate to a 2',3'-cyclic phosphodiester at the end of RNA. The mechanism of action of the enzyme occurs in 3 steps: (A) adenylation of the enzyme by ATP; (B) transfer of adenylate to an RNA-N3'P to produce RNA-N3'PP5'A; (C) and attack of the adjacent 2'-hydroxyl on the 3'-phosphorus in the diester linkage to produce the cyclic end product. The biological role of this enzyme is unknown but it is likely to function in some aspects of cellular RNA processing. The polypeptide is RNA 3'-terminal phosphate cyclase (Caldivirga maquilingensis (strain ATCC 700844 / DSM 13496 / JCM 10307 / IC-167)).